The following is a 308-amino-acid chain: Polyprenyl-phosphate transporter (308 aa).

8 consecutive transmembrane segments (helical) span residues 15 to 35 (GLAM…IAFI), 69 to 89 (INGL…ATLA), 91 to 111 (LISW…FGLI), 130 to 150 (LLWL…KPLH), 163 to 183 (AIAI…LLLI), 200 to 220 (ILLI…HILS), 228 to 248 (DVTL…IWPW), and 282 to 302 (PSQW…VLGL).

This sequence belongs to the PopT family.

Its subcellular location is the cell inner membrane. Its activity is regulated as follows. Active in alkaline conditions. In terms of biological role, flippase that catalyzes the transport of undecaprenyl phosphate (UndP) across the cytoplasmic membrane, from the external side to the cytoplasmic side. Is involved in UndP recycling during peptidoglycan synthesis. Required for cell shape maintenance at alkaline pH and peptidoglycan maintenance. Required by the cholera pathogen for growth and cell shape maintenance in the intestine. This is Polyprenyl-phosphate transporter from Vibrio cholerae serotype O1 (strain ATCC 39315 / El Tor Inaba N16961).